The sequence spans 188 residues: Elongation factor P (188 aa).

Residue K34 is modified to N6-(3,6-diaminohexanoyl)-5-hydroxylysine.

It belongs to the elongation factor P family. In terms of processing, may be beta-lysylated on the epsilon-amino group of Lys-34 by the combined action of EpmA and EpmB, and then hydroxylated on the C5 position of the same residue by EpmC (if this protein is present). Lysylation is critical for the stimulatory effect of EF-P on peptide-bond formation. The lysylation moiety may extend toward the peptidyltransferase center and stabilize the terminal 3-CCA end of the tRNA. Hydroxylation of the C5 position on Lys-34 may allow additional potential stabilizing hydrogen-bond interactions with the P-tRNA.

It localises to the cytoplasm. It functions in the pathway protein biosynthesis; polypeptide chain elongation. Involved in peptide bond synthesis. Alleviates ribosome stalling that occurs when 3 or more consecutive Pro residues or the sequence PPG is present in a protein, possibly by augmenting the peptidyl transferase activity of the ribosome. Modification of Lys-34 is required for alleviation. The sequence is that of Elongation factor P from Stenotrophomonas maltophilia (strain K279a).